Reading from the N-terminus, the 586-residue chain is MDYLKTVVPSQLMAERGANLVVINPGSSNVRIGFASQDVPFNIPHCIARHITQQKDDTPRLSVRDKMLNCHATPSQNAERERAYDIIASLLKIPFLDEDMPSANQALPPKMGRVDALSSQQNKDDSKFTWTDVMDRSIKSSTPIVDKDADVDPLQRSTPDDTEPNSEENMYKEIIFGEDALKIPPSESYCLSHPIRRGHFNISQDYSLHQVLEDLRTIWNWILTEKLHINPRDRHLYSAILVLGETFDNREIKEMLSIVLCDLGFSTAVIHQEALAAAFGNGLSTSCVVNIGAQVTQVVCVEDGVALPHTALALPYGGDDISRCLLWVQRRHCTWPNFQTDPVNKPIDMLMLNKLKESYSQIRSGSFDAVSVVHSYEHEKSVGHQKTKLSALNVPPMGLLYPRVLVPEEYPPPPRSWFQDYDDMLEDTWQTSDSLYSSGNGGFGMWDNYPMFPTRLKKFDNIGLVEAIVSSILSTGRIELQRKLFCSIQLVGGTASTAGLAPVLEQRVLNTIPSNQPIEKAEVLQSRSYPLFVPWKGGVILGVLDIGRDAWIHREDWAKNGVHIGSGRKYRDSYFLQAQAMCYYNS.

The disordered stretch occupies residues 141 to 169; it reads STPIVDKDADVDPLQRSTPDDTEPNSEEN.

Belongs to the actin family. ARP8 subfamily.

In Oryza sativa subsp. japonica (Rice), this protein is Actin-related protein 9 (ARP9).